The sequence spans 594 residues: Type IV inositol polyphosphate 5-phosphatase 7 (594 aa).

Positions 246–300 (FRCGHRPSDYSRRPSDYSRPSDYYSRPSNYSRPSDVSRWGSSDDDNGPGDSPSTF) are disordered. The segment covering 251-261 (RPSDYSRRPSD) has biased composition (basic and acidic residues). Low complexity predominate over residues 262–279 (YSRPSDYYSRPSNYSRPS). 2 catalytic regions span residues 435–450 (DRVI…IALS) and 515–530 (KRRT…WHGE).

This sequence belongs to the inositol polyphosphate 5-phosphatase family. Broadly expressed in emerging organs. Mostly localized in procambium of growing organs. Restricted to vascular differentiating cells of young organs.

Its subcellular location is the nucleus. It localises to the cell membrane. It carries out the reaction a 1,2-diacyl-sn-glycero-3-phospho-(1D-myo-inositol-4,5-bisphosphate) + H2O = a 1,2-diacyl-sn-glycero-3-phospho-(1D-myo-inositol 4-phosphate) + phosphate. The enzyme catalyses a 1,2-diacyl-sn-glycero-3-phospho-(1D-myo-inositol-3,4,5-trisphosphate) + H2O = a 1,2-diacyl-sn-glycero-3-phospho-(1D-myo-inositol-3,4-bisphosphate) + phosphate. In terms of biological role, has phosphatase activity toward PtdIns(4,5)P2 and at a lower extent toward PtdIns(3,4,5)P3 but not toward Ins(1,4,5)P3. Acts redundantly with CVP2 for maintaining vascular continuity. Regulates phosphoinositide-dependent VAN3 localization. Functions in salt stress response by regulating reactive oxygen species (ROS) production and stress-responsive genes expression. The chain is Type IV inositol polyphosphate 5-phosphatase 7 from Arabidopsis thaliana (Mouse-ear cress).